The chain runs to 243 residues: Sugar fermentation stimulation protein homolog (243 aa).

This sequence belongs to the SfsA family.

This chain is Sugar fermentation stimulation protein homolog, found in Bdellovibrio bacteriovorus (strain ATCC 15356 / DSM 50701 / NCIMB 9529 / HD100).